Here is a 56-residue protein sequence, read N- to C-terminus: MPLTDQAKIQIVQERVFIKKVCRNCGALNSIRATKCRRCHSTNLRPKKKELPTKRA.

Belongs to the eukaryotic ribosomal protein eL40 family.

The polypeptide is Large ribosomal subunit protein eL40 (Metallosphaera sedula (strain ATCC 51363 / DSM 5348 / JCM 9185 / NBRC 15509 / TH2)).